Consider the following 1020-residue polypeptide: Carbamoyl phosphate synthase arginine-specific large chain (1020 aa).

The tract at residues 1 to 401 (MPKNNAIHSI…ATLKAIASLE (401 aa)) is carboxyphosphate synthetic domain. The ATP site is built by R129, R169, G175, G176, Q208, I210, E215, G241, I242, H243, Q284, and E298. The ATP-grasp 1 domain occupies 133–327 (KTLMKRLHQP…IAKIAADIAI (195 aa)). Mg(2+) is bound by residues Q284, E298, and N300. Residues Q284, E298, and N300 each contribute to the Mn(2+) site. 2 oligomerization domain regions span residues 402–542 (IDPK…FGQT) and 402–544 (IDPK…QTNE). 2 carbamoyl phosphate synthetic domain regions span residues 543 to 927 (NESH…ADSY) and 544 to 927 (ESHP…ADSY). The region spanning 669–858 (ADCLRLLKIA…LAQLATRLIL (190 aa)) is the ATP-grasp 2 domain. Residues R705, Q744, L746, E750, G775, V776, H777, S778, and Q818 each contribute to the ATP site. Q818 and N831 together coordinate Mg(2+). Mn(2+)-binding residues include Q818 and N831. Residues 927–1020 (YHLETWQTVD…LAVTPTPATI (94 aa)) form the MGS-like domain. Positions 928–1020 (HLETWQTVDG…LAVTPTPATI (93 aa)) are allosteric domain.

The protein belongs to the CarB family. Composed of two chains; the small (or glutamine) chain promotes the hydrolysis of glutamine to ammonia, which is used by the large (or ammonia) chain to synthesize carbamoyl phosphate. Tetramer of heterodimers (alpha,beta)4. Mg(2+) is required as a cofactor. Mn(2+) serves as cofactor.

It catalyses the reaction hydrogencarbonate + L-glutamine + 2 ATP + H2O = carbamoyl phosphate + L-glutamate + 2 ADP + phosphate + 2 H(+). It carries out the reaction hydrogencarbonate + NH4(+) + 2 ATP = carbamoyl phosphate + 2 ADP + phosphate + 2 H(+). Its pathway is amino-acid biosynthesis; L-arginine biosynthesis; carbamoyl phosphate from bicarbonate: step 1/1. Large subunit of the glutamine-dependent carbamoyl phosphate synthetase (CPSase). CPSase catalyzes the formation of carbamoyl phosphate from the ammonia moiety of glutamine, carbonate, and phosphate donated by ATP, constituting the first step of the biosynthetic pathway leading to arginine and/or urea. The large subunit (synthetase) binds the substrates ammonia (free or transferred from glutamine from the small subunit), hydrogencarbonate and ATP and carries out an ATP-coupled ligase reaction, activating hydrogencarbonate by forming carboxy phosphate which reacts with ammonia to form carbamoyl phosphate. In Lactiplantibacillus plantarum (strain ATCC BAA-793 / NCIMB 8826 / WCFS1) (Lactobacillus plantarum), this protein is Carbamoyl phosphate synthase arginine-specific large chain.